A 341-amino-acid chain; its full sequence is Src kinase-associated phosphoprotein 2 (341 aa).

The segment at 54-95 (FKDRRDEEFPEPDEADTNDGGSLHSEQTDRDDENAYDGVQQS) is disordered. Residues 61 to 70 (EFPEPDEADT) are compositionally biased toward acidic residues. Residues 105-208 (AVLKSGYLEK…WVEHIDFLIK (104 aa)) form the PH domain. A disordered region spans residues 246–265 (EEDVPQPSKPKVTLVNKPPP). Residues 279–340 (DYANYFQGLW…PKEYLLELYV (62 aa)) form the SH3 domain.

Belongs to the SKAP family. In terms of processing, phosphorylated on tyrosines.

The protein resides in the cytoplasm. Functionally, may be involved in B-cell and macrophage adhesion processes. May play a role in src signaling pathway. This is Src kinase-associated phosphoprotein 2 (skap2) from Danio rerio (Zebrafish).